The sequence spans 313 residues: Ribose-phosphate pyrophosphokinase (313 aa).

ATP is bound by residues 37–39 (DGE) and 96–97 (RQ). Mg(2+)-binding residues include His131 and Asp170. Lys193 is a catalytic residue. D-ribose 5-phosphate-binding positions include Arg195, Asp219, and 223–227 (DTAGT).

This sequence belongs to the ribose-phosphate pyrophosphokinase family. Class I subfamily. Homohexamer. Mg(2+) is required as a cofactor.

The protein localises to the cytoplasm. The catalysed reaction is D-ribose 5-phosphate + ATP = 5-phospho-alpha-D-ribose 1-diphosphate + AMP + H(+). Its pathway is metabolic intermediate biosynthesis; 5-phospho-alpha-D-ribose 1-diphosphate biosynthesis; 5-phospho-alpha-D-ribose 1-diphosphate from D-ribose 5-phosphate (route I): step 1/1. In terms of biological role, involved in the biosynthesis of the central metabolite phospho-alpha-D-ribosyl-1-pyrophosphate (PRPP) via the transfer of pyrophosphoryl group from ATP to 1-hydroxyl of ribose-5-phosphate (Rib-5-P). The protein is Ribose-phosphate pyrophosphokinase of Pseudomonas syringae pv. tomato (strain ATCC BAA-871 / DC3000).